Here is a 427-residue protein sequence, read N- to C-terminus: 4-hydroxy-3-methylbut-2-en-1-yl diphosphate synthase (flavodoxin) (427 aa).

The interval 1 to 21 (MNKLENTIDSDIAGPAPRHRT) is disordered. Residues C310, C313, C356, and E363 each contribute to the [4Fe-4S] cluster site.

The protein belongs to the IspG family. It depends on [4Fe-4S] cluster as a cofactor.

It carries out the reaction (2E)-4-hydroxy-3-methylbut-2-enyl diphosphate + oxidized [flavodoxin] + H2O + 2 H(+) = 2-C-methyl-D-erythritol 2,4-cyclic diphosphate + reduced [flavodoxin]. The protein operates within isoprenoid biosynthesis; isopentenyl diphosphate biosynthesis via DXP pathway; isopentenyl diphosphate from 1-deoxy-D-xylulose 5-phosphate: step 5/6. Its function is as follows. Converts 2C-methyl-D-erythritol 2,4-cyclodiphosphate (ME-2,4cPP) into 1-hydroxy-2-methyl-2-(E)-butenyl 4-diphosphate. This chain is 4-hydroxy-3-methylbut-2-en-1-yl diphosphate synthase (flavodoxin), found in Bradyrhizobium diazoefficiens (strain JCM 10833 / BCRC 13528 / IAM 13628 / NBRC 14792 / USDA 110).